Reading from the N-terminus, the 159-residue chain is MRITGQPHVYKKDTIIRLKPLSLNSNNRSYVFSSSKGNIQNIINHLNNLNEIVGRSLLGIWKINSYFGLSKDPSESKSKNPSVFNTAKTIFKSGGVDYSSQLKEIKSLLEAQNTRIKNLEKAIQSLDNKIEPEPLTKKEVKELKESINSIKEGLKNIIG.

Belongs to the caulimoviridae ORF II family.

Functionally, this protein is involved in virus transmission. The sequence is that of Aphid transmission protein from Cauliflower mosaic virus (strain BBC) (CaMV).